A 148-amino-acid chain; its full sequence is Glutamyl-tRNA(Gln) amidotransferase subunit C, mitochondrial (148 aa).

It belongs to the GatC family. In terms of assembly, subunit of the heterotrimeric GatCAB amidotransferase (AdT) complex, composed of A, B and C subunits.

The protein resides in the mitochondrion. It carries out the reaction L-glutamyl-tRNA(Gln) + L-glutamine + ATP + H2O = L-glutaminyl-tRNA(Gln) + L-glutamate + ADP + phosphate + H(+). Its function is as follows. Allows the formation of correctly charged Gln-tRNA(Gln) through the transamidation of misacylated Glu-tRNA(Gln) in the mitochondria. The reaction takes place in the presence of glutamine and ATP through an activated gamma-phospho-Glu-tRNA(Gln). The chain is Glutamyl-tRNA(Gln) amidotransferase subunit C, mitochondrial from Drosophila simulans (Fruit fly).